A 452-amino-acid polypeptide reads, in one-letter code: Translation initiation factor eIF2B subunit gamma (452 aa).

Residue Met-1 is modified to N-acetylmethionine. Ser-261 is modified (phosphoserine).

Belongs to the eIF-2B gamma/epsilon subunits family. As to quaternary structure, component of the translation initiation factor 2B (eIF2B) complex which is a heterodecamer of two sets of five different subunits: alpha, beta, gamma, delta and epsilon. Subunits alpha, beta and delta comprise a regulatory subcomplex and subunits epsilon and gamma comprise a catalytic subcomplex. Within the complex, the hexameric regulatory complex resides at the center, with the two heterodimeric catalytic subcomplexes bound on opposite sides.

It localises to the cytoplasm. The protein localises to the cytosol. Activated by the chemical integrated stress response (ISR) inhibitor ISRIB which stimulates guanine nucleotide exchange factor activity for both phosphorylated and unphosphorylated eIF2. In terms of biological role, acts as a component of the translation initiation factor 2B (eIF2B) complex, which catalyzes the exchange of GDP for GTP on the eukaryotic initiation factor 2 (eIF2) complex gamma subunit. Its guanine nucleotide exchange factor activity is repressed when bound to eIF2 complex phosphorylated on the alpha subunit, thereby limiting the amount of methionyl-initiator methionine tRNA available to the ribosome and consequently global translation is repressed. The sequence is that of Translation initiation factor eIF2B subunit gamma (EIF2B3) from Bos taurus (Bovine).